Consider the following 330-residue polypeptide: Endo-1,4-beta-xylanase (330 aa).

Residues 2–330 (CSSIPSLREV…KPAFWRVVNI (329 aa)) form the GH10 domain. Glu133 functions as the Proton donor in the catalytic mechanism. Glu240 acts as the Nucleophile in catalysis.

Belongs to the glycosyl hydrolase 10 (cellulase F) family. Cytoplasmic xylanase subfamily.

The protein localises to the cytoplasm. The catalysed reaction is Endohydrolysis of (1-&gt;4)-beta-D-xylosidic linkages in xylans.. It participates in glycan degradation; xylan degradation. This Geobacillus stearothermophilus (Bacillus stearothermophilus) protein is Endo-1,4-beta-xylanase (xynA).